A 109-amino-acid polypeptide reads, in one-letter code: Parvalbumin alpha (109 aa).

N-acetylserine is present on Ser1. EF-hand domains lie at 38–73 (KSDA…FSDG) and 77–109 (LNDK…AKMT). Residues Asp51, Asp53, Ser55, Tyr57, Glu59, Glu62, Asp90, Asp92, Asp94, Lys96, and Glu101 each coordinate Ca(2+).

It belongs to the parvalbumin family. In terms of assembly, monomer.

In terms of biological role, in muscle, parvalbumin is thought to be involved in relaxation after contraction. It binds two calcium ions. This chain is Parvalbumin alpha, found in Raja clavata (Thornback ray).